We begin with the raw amino-acid sequence, 264 residues long: uncharacterized protein (264 aa).

The first 26 residues, 1–26 (MMKKLFHSTLIVLLFFSFFGVQPIHA), serve as a signal peptide directing secretion.

This is an uncharacterized protein from Bacillus subtilis (strain 168).